We begin with the raw amino-acid sequence, 2462 residues long: Non-reducing polyketide synthase ausA (2462 aa).

Residues 16–253 (VFFGPVYPEL…HTADHIPAMK (238 aa)) are N-terminal acylcarrier protein transacylase domain (SAT). A Ketosynthase family 3 (KS3) domain is found at 385–801 (SAPIAVTGFA…GSNAVIVVKE (417 aa)). Residues cysteine 550, histidine 685, and histidine 724 each act as for beta-ketoacyl synthase activity in the active site. The segment at 904–1208 (LCFGGQTGDT…LPIDLQESTA (305 aa)) is malonyl-CoA:ACP transacylase (MAT) domain. Serine 991 (for acyl/malonyl transferase activity) is an active-site residue. An N-terminal hotdog fold region spans residues 1274–1403 (HDDGLLQLVE…GKVLLDPQAA (130 aa)). The PKS/mFAS DH domain maps to 1274-1581 (HDDGLLQLVE…FTSVSIQSLK (308 aa)). The product template (PT) domain stretch occupies residues 1277 to 1580 (GLLQLVERDA…TFTSVSIQSL (304 aa)). Histidine 1307 functions as the Proton acceptor; for dehydratase activity in the catalytic mechanism. Residues 1431–1581 (SSNGLKRATV…FTSVSIQSLK (151 aa)) form a C-terminal hotdog fold region. The Proton donor; for dehydratase activity role is filled by aspartate 1489. In terms of domain architecture, Carrier spans 1613 to 1690 (VSDDHHLRAV…GLAHRISPSS (78 aa)). O-(pantetheine 4'-phosphoryl)serine is present on serine 1650. The interval 1850–2083 (QHASEHKLLR…GFNWVDWTDN (234 aa)) is methyltransferase (CMeT) domain. A thioesterase (TE) domain region spans residues 2112–2462 (TPARVETVRY…YEFLRQHVAV (351 aa)). Active-site for thioesterase activity residues include serine 2235, aspartate 2398, and histidine 2430.

The catalysed reaction is 3 malonyl-CoA + acetyl-CoA + 2 S-adenosyl-L-methionine = 3,5-dimethylorsellinate + 2 S-adenosyl-L-homocysteine + 3 CO2 + 4 CoA. It participates in secondary metabolite biosynthesis; terpenoid biosynthesis. Its function is as follows. Non-reducing polyketide synthase; part of the gene cluster that mediates the biosynthesis of calidodehydroaustin, a fungal meroterpenoid. The first step of the pathway is the synthesis of 3,5-dimethylorsellinic acid by the polyketide synthase ausA. 3,5-dimethylorsellinic acid is then prenylated by the polyprenyl transferase ausN. Further epoxidation by the FAD-dependent monooxygenase ausM and cyclization by the probable terpene cyclase ausL lead to the formation of protoaustinoid A. Protoaustinoid A is then oxidized to spiro-lactone preaustinoid A3 by the combined action of the FAD-binding monooxygenases ausB and ausC, and the dioxygenase ausE. Acid-catalyzed keto-rearrangement and ring contraction of the tetraketide portion of preaustinoid A3 by ausJ lead to the formation of preaustinoid A4. The aldo-keto reductase ausK, with the help of ausH, is involved in the next step by transforming preaustinoid A4 into isoaustinone which is in turn hydroxylated by the P450 monooxygenase ausI to form austinolide. The cytochrome P450 monooxygenase ausG modifies austinolide to austinol. Austinol is further acetylated to austin by the O-acetyltransferase ausP, which spontaneously changes to dehydroaustin. The cytochrome P450 monooxygenase ausR then converts dehydroaustin is into 7-dehydrodehydroaustin. The hydroxylation catalyzed by ausR permits the O-acetyltransferase ausQ to add an additional acetyl group to the molecule, leading to the formation of acetoxydehydroaustin. The short chain dehydrogenase ausT catalyzes the reduction of the double bond present between carbon atoms 1 and 2 to convert 7-dehydrodehydroaustin into 1,2-dihydro-7-hydroxydehydroaustin. AusQ catalyzes not only an acetylation reaction but also the addition of the PKS ausV diketide product to 1,2-dihydro-7-hydroxydehydroaustin, forming precalidodehydroaustin. Finally, the iron/alpha-ketoglutarate-dependent dioxygenase converts precalidodehydroaustin into calidodehydroaustin. The protein is Non-reducing polyketide synthase ausA of Aspergillus calidoustus.